Reading from the N-terminus, the 97-residue chain is Co-chaperonin GroES (97 aa).

Belongs to the GroES chaperonin family. As to quaternary structure, heptamer of 7 subunits arranged in a ring. Interacts with the chaperonin GroEL.

The protein localises to the cytoplasm. Together with the chaperonin GroEL, plays an essential role in assisting protein folding. The GroEL-GroES system forms a nano-cage that allows encapsulation of the non-native substrate proteins and provides a physical environment optimized to promote and accelerate protein folding. GroES binds to the apical surface of the GroEL ring, thereby capping the opening of the GroEL channel. The chain is Co-chaperonin GroES from Buchnera aphidicola subsp. Cinara cedri (strain Cc).